Reading from the N-terminus, the 122-residue chain is Large ribosomal subunit protein bL12 (122 aa).

Belongs to the bacterial ribosomal protein bL12 family. Homodimer. Part of the ribosomal stalk of the 50S ribosomal subunit. Forms a multimeric L10(L12)X complex, where L10 forms an elongated spine to which 2 to 4 L12 dimers bind in a sequential fashion. Binds GTP-bound translation factors.

Functionally, forms part of the ribosomal stalk which helps the ribosome interact with GTP-bound translation factors. Is thus essential for accurate translation. The polypeptide is Large ribosomal subunit protein bL12 (Streptococcus sanguinis (strain SK36)).